The sequence spans 180 residues: ATP-dependent Clp protease proteolytic subunit 2 (180 aa).

The active-site Nucleophile is Ser86. His111 is an active-site residue.

It belongs to the peptidase S14 family. As to quaternary structure, fourteen ClpP subunits assemble into 2 heptameric rings which stack back to back to give a disk-like structure with a central cavity, resembling the structure of eukaryotic proteasomes.

The protein localises to the cytoplasm. It catalyses the reaction Hydrolysis of proteins to small peptides in the presence of ATP and magnesium. alpha-casein is the usual test substrate. In the absence of ATP, only oligopeptides shorter than five residues are hydrolyzed (such as succinyl-Leu-Tyr-|-NHMec, and Leu-Tyr-Leu-|-Tyr-Trp, in which cleavage of the -Tyr-|-Leu- and -Tyr-|-Trp bonds also occurs).. Functionally, cleaves peptides in various proteins in a process that requires ATP hydrolysis. Has a chymotrypsin-like activity. Plays a major role in the degradation of misfolded proteins. This chain is ATP-dependent Clp protease proteolytic subunit 2, found in Tropheryma whipplei (strain Twist) (Whipple's bacillus).